The following is a 140-amino-acid chain: Protein NrdI (140 aa).

The protein belongs to the NrdI family.

In terms of biological role, probably involved in ribonucleotide reductase function. In Ruegeria sp. (strain TM1040) (Silicibacter sp.), this protein is Protein NrdI.